The following is a 100-amino-acid chain: Small ribosomal subunit protein uS14c (100 aa).

It belongs to the universal ribosomal protein uS14 family. As to quaternary structure, part of the 30S ribosomal subunit.

It localises to the plastid. The protein resides in the chloroplast. Binds 16S rRNA, required for the assembly of 30S particles. The sequence is that of Small ribosomal subunit protein uS14c from Barbarea verna (Land cress).